The sequence spans 576 residues: uncharacterized protein (576 aa).

The disordered stretch occupies residues 41–78 (EKESESKLNSKSTTLQSSDSEDWDSEENEDDITDVGVP). The span at 49 to 58 (NSKSTTLQSS) shows a compositional bias: low complexity. The segment covering 59 to 73 (DSEDWDSEENEDDIT) has biased composition (acidic residues). WD repeat units follow at residues 87-126 (GHSK…ATNP), 195-235 (GHIA…SQLE), 248-288 (LSRI…KRPV), 296-335 (LPQQ…KCVN), and 393-433 (TVTA…RGVK). Residues 547–576 (SETQPTPIYQGVTEGDISSEEGNPSKKQKR) are disordered.

This is an uncharacterized protein from Schizosaccharomyces pombe (strain 972 / ATCC 24843) (Fission yeast).